A 186-amino-acid chain; its full sequence is uncharacterized protein (186 aa).

This is an uncharacterized protein from Trypanosoma brucei brucei.